The sequence spans 140 residues: Profilin-1 (140 aa).

A2 bears the N-acetylalanine mark. A Phosphoserine modification is found at S28. K54 is covalently cross-linked (Glycyl lysine isopeptide (Lys-Gly) (interchain with G-Cter in SUMO2); alternate). K54 is covalently cross-linked (Glycyl lysine isopeptide (Lys-Gly) (interchain with G-Cter in ubiquitin); alternate). A phosphoserine mark is found at S57 and S85. N6-acetyllysine occurs at positions 105 and 108. At Y129 the chain carries Phosphotyrosine. At S138 the chain carries Phosphoserine; by ROCK1.

The protein belongs to the profilin family. Found in a complex with XPO6, Ran, ACTB and PFN1. Interacts with ACTB. Interacts with VASP. Interacts with HTT. Interacts with SH3BGRL. Occurs in many kinds of cells as a complex with monomeric actin in a 1:1 ratio. Interacts with ACTMAP. Post-translationally, phosphorylation at Ser-138 reduces its affinity for G-actin and blocks its interaction with HTT, reducing its ability to inhibit androgen receptor (AR) and HTT aggregation. In terms of tissue distribution, expressed in epididymis (at protein level).

The protein localises to the cytoplasm. The protein resides in the cytoskeleton. In terms of biological role, binds to actin and affects the structure of the cytoskeleton. At high concentrations, profilin prevents the polymerization of actin, whereas it enhances it at low concentrations. By binding to PIP2, it inhibits the formation of IP3 and DG. Inhibits androgen receptor (AR) and HTT aggregation and binding of G-actin is essential for its inhibition of AR. This chain is Profilin-1 (PFN1), found in Homo sapiens (Human).